The chain runs to 354 residues: UDP-N-acetylglucosamine--N-acetylmuramyl-(pentapeptide) pyrophosphoryl-undecaprenol N-acetylglucosamine transferase (354 aa).

UDP-N-acetyl-alpha-D-glucosamine contacts are provided by residues 15-17 (TGG), Asn127, Arg163, Ser191, Ile244, 263-268 (ALTVSE), and Gln288.

Belongs to the glycosyltransferase 28 family. MurG subfamily.

It is found in the cell inner membrane. The enzyme catalyses di-trans,octa-cis-undecaprenyl diphospho-N-acetyl-alpha-D-muramoyl-L-alanyl-D-glutamyl-meso-2,6-diaminopimeloyl-D-alanyl-D-alanine + UDP-N-acetyl-alpha-D-glucosamine = di-trans,octa-cis-undecaprenyl diphospho-[N-acetyl-alpha-D-glucosaminyl-(1-&gt;4)]-N-acetyl-alpha-D-muramoyl-L-alanyl-D-glutamyl-meso-2,6-diaminopimeloyl-D-alanyl-D-alanine + UDP + H(+). It participates in cell wall biogenesis; peptidoglycan biosynthesis. Cell wall formation. Catalyzes the transfer of a GlcNAc subunit on undecaprenyl-pyrophosphoryl-MurNAc-pentapeptide (lipid intermediate I) to form undecaprenyl-pyrophosphoryl-MurNAc-(pentapeptide)GlcNAc (lipid intermediate II). This chain is UDP-N-acetylglucosamine--N-acetylmuramyl-(pentapeptide) pyrophosphoryl-undecaprenol N-acetylglucosamine transferase, found in Vibrio cholerae serotype O1 (strain ATCC 39315 / El Tor Inaba N16961).